Consider the following 1236-residue polypeptide: Structural polyprotein (1236 aa).

The segment at 1 to 36 is necessary for nucleocapsid assembly and virus assembly; sequence MFPYPQLNFPPVYPTNPMAYRDPNPPRCRWRPFRPP. The host transcription inhibition stretch occupies residues 37 to 70; the sequence is LAAQIEDLRRSIANLTFKQRSPNPPPGPPPKKKK. Positions 44–51 match the Supraphysiological nuclear export signal motif; sequence LRRSIANL. The disordered stretch occupies residues 44–103; that stretch reads LRRSIANLTFKQRSPNPPPGPPPKKKKSAPKPKPTQPKKKKQQAKKTKRKPKPGKRQRMC. Basic residues predominate over residues 66-102; sequence PKKKKSAPKPKPTQPKKKKQQAKKTKRKPKPGKRQRM. The short motif at 67-70 is the Nuclear localization signal element; sequence KKKK. Residues 83–111 form a binding to the viral RNA region; it reads KKQQAKKTKRKPKPGKRQRMCMKLESDKT. Positions 96 to 110 are ribosome-binding; it reads PGKRQRMCMKLESDK. At Ser108 the chain carries Phosphoserine. One can recognise a Peptidase S3 domain in the interval 110 to 259; it reads KTFPIMLNGQ…KDTPEGSEPW (150 aa). Phosphothreonine is present on Thr111. Catalysis depends on His136, which acts as the Charge relay system. The tract at residues 152–157 is interaction with spike glycoprotein E2; the sequence is KKASMY. Active-site charge relay system residues include Asp158 and Ser210. Positions 244–248 are interaction with spike glycoprotein E2; that stretch reads QKGVT. Residues 260–271 form a functions as an uncleaved signal peptide for the precursor of protein E3/E2 region; sequence SLVTALCVLSNV. At 260 to 687 the chain is on the extracellular side; that stretch reads SLVTALCVLS…YYHRHPVYTV (428 aa). Cystine bridges form between Cys266–Cys275, Cys335–Cys443, Cys338–Cys344, Cys410–Cys424, Cys471–Cys585, Cys520–Cys545, and Cys522–Cys539. Residue Asn270 is glycosylated (N-linked (GlcNAc...) asparagine; by host). Residue Asn515 is glycosylated (N-linked (GlcNAc...) asparagine; by host). An N-linked (GlcNAc...) asparagine; by host glycan is attached at Asn637. The helical transmembrane segment at 688-708 threads the bilayer; it reads IVLCGVALAILVGTASSAACI. The Cytoplasmic segment spans residues 709–742; that stretch reads AKARRDCLTPYALAPNATVPTALAVLCCIRPTNA. The segment at 710–714 is interaction with the capsid protein; that stretch reads KARRD. 3 S-palmitoyl cysteine; by host lipidation sites follow: Cys715, Cys735, and Cys736. Cys715 and Cys736 are oxidised to a cystine. Residues 717–737 form a transient transmembrane before p62-6K protein processing region; that stretch reads TPYALAPNATVPTALAVLCCI. Topologically, residues 743 to 767 are extracellular; sequence ETFGETLNHLWFNNQPFLWAQLCIP. Transmembrane regions (helical) follow at residues 768–788 and 789–809; these read LAAL…LLVA and GVCL…NVPG. At 810 to 1205 the chain is on the extracellular side; that stretch reads IPYKALVERA…QAAVSKTSWN (396 aa). 4 disulfide bridges follow: Cys846/Cys911, Cys859/Cys891, Cys860/Cys893, and Cys865/Cys875. The tract at residues 881–898 is E1 fusion peptide loop; sequence VYPFMWGGAQCFCDSENT. N-linked (GlcNAc...) asparagine; by host glycosylation is found at Asn936, Asn1042, and Asn1067. Intrachain disulfides connect Cys1056-Cys1068, Cys1098-Cys1173, Cys1103-Cys1177, and Cys1125-Cys1167. Residues 1206–1226 form a helical membrane-spanning segment; sequence WLLALFGGASSLIVVGLIVLV. The Cytoplasmic segment spans residues 1227-1236; it reads CSSMLINTRR.

In terms of assembly, homodimer. Homomultimer. Interacts with host karyopherin KPNA4; this interaction allows the nuclear import of the viral capsid protein. Interacts with spike glycoprotein E2. Interacts with host IRAK1; the interaction leads to inhibition of IRAK1-dependent signaling. Part of a tetrameric complex composed of host CRM1, host importin alpha/beta dimer and the viral capsid; this complex blocks the receptor-mediated transport through the nuclear pore. Interacts with host phosphatase PPP1CA; this interaction dephosphorylates the capsid protein, which increases its ability to bind to the viral genome. The precursor of protein E3/E2 and E1 form a heterodimer shortly after synthesis. As to quaternary structure, interacts with spike glycoprotein E2. The precursor of protein E3/E2 and E1 form a heterodimer shortly after synthesis. Processing of the precursor of protein E3/E2 into E2 and E3 results in a heterodimer of the spike glycoproteins E2 and E1. Spike at virion surface are constituted of three E2-E1 heterodimers. After target cell attachment and endocytosis, E1 change conformation to form homotrimers. Interacts with 6K protein. In terms of assembly, interacts with spike glycoprotein E1. Processing of the precursor of protein E3/E2 into E2 and E3 results in a heterodimer of the spike glycoproteins E2 and E1. Spike at virion surface are constituted of a trimer of E2-E1 heterodimers. Interacts with 6K protein. The E2-E1 heterodimer interacts with host PCDH10 (via domain Cadherin 1); this interaction mediates viral entry to the host cell. Oligomer. Interacts with spike glycoprotein E1. Interacts with spike glycoprotein E2. Post-translationally, structural polyprotein: Specific enzymatic cleavages in vivo yield mature proteins. Capsid protein is auto-cleaved during polyprotein translation, unmasking a signal peptide at the N-terminus of the precursor of E3/E2. The remaining polyprotein is then targeted to the host endoplasmic reticulum, where host signal peptidase cleaves it into pE2, 6K and E1 proteins. pE2 is further processed to mature E3 and E2 by host furin in trans-Golgi vesicle. Phosphorylated on serine and threonine residues. In terms of processing, palmitoylated via thioester bonds. These palmitoylations may induce disruption of the C-terminus transmembrane. This would result in the reorientation of E2 C-terminus from lumenal to cytoplasmic side. Post-translationally, N-glycosylated. Palmitoylated via thioester bonds.

The protein localises to the virion. The protein resides in the host cytoplasm. It localises to the host cell membrane. It is found in the host nucleus. Its subcellular location is the virion membrane. The protein localises to the host Golgi apparatus. The protein resides in the host trans-Golgi network. It localises to the host endoplasmic reticulum. It catalyses the reaction Autocatalytic release of the core protein from the N-terminus of the togavirus structural polyprotein by hydrolysis of a -Trp-|-Ser- bond.. Functionally, forms an icosahedral capsid with a T=4 symmetry composed of 240 copies of the capsid protein surrounded by a lipid membrane through which penetrate 80 spikes composed of trimers of E1-E2 heterodimers. The capsid protein binds to the viral RNA genome at a site adjacent to a ribosome binding site for viral genome translation following genome release. Possesses a protease activity that results in its autocatalytic cleavage from the nascent structural protein. Following its self-cleavage, the capsid protein transiently associates with ribosomes, and within several minutes the protein binds to viral RNA and rapidly assembles into icosahedric core particles. The resulting nucleocapsid eventually associates with the cytoplasmic domain of the spike glycoprotein E2 at the cell membrane, leading to budding and formation of mature virions. In case of infection, new virions attach to target cells and after clathrin-mediated endocytosis their membrane fuses with the host endosomal membrane. This leads to the release of the nucleocapsid into the cytoplasm, followed by an uncoating event necessary for the genomic RNA to become accessible. The uncoating might be triggered by the interaction of capsid proteins with ribosomes. Binding of ribosomes would release the genomic RNA since the same region is genomic RNA-binding and ribosome-binding. Specifically inhibits interleukin-1 receptor-associated kinase 1/IRAK1-dependent signaling during viral entry, representing a means by which the alphaviruses may evade innate immune detection and activation prior to viral gene expression. Inhibits host transcription. Forms a tetrameric complex with XPO1/CRM1 and the nuclear import receptor importin. This complex blocks the central channel of host nuclear pores thereby inhibiting the receptor-mediated nuclear transport and thus the host mRNA and rRNA transcription. The inhibition of transcription is linked to a cytopathic effect on the host cell. In terms of biological role, provides the signal sequence for the translocation of the precursor of protein E3/E2 to the host endoplasmic reticulum. Furin-cleaved E3 remains associated with spike glycoprotein E1 and mediates pH protection of the latter during the transport via the secretory pathway. After virion release from the host cell, the assembly protein E3 is gradually released in the extracellular space. Its function is as follows. Plays an essential role in viral attachment to target host cell, by binding to the cell receptor PCDH10. Some specific strains may also bind host receptors VLDLR and LRP8/APOER2. Synthesized as a pE2 precursor which is processed by furin at the cell membrane just before virion budding, giving rise to E2-E1 heterodimer. The pE2-E1 heterodimer is stable, whereas E2-E1 is unstable and dissociate at low pH. pE2 is processed at the last step, presumably to avoid E1 fusion activation before its final export to cell surface. E2 C-terminus contains a transitory transmembrane that would be disrupted by palmitoylation, resulting in reorientation of the C-terminal tail from lumenal to cytoplasmic side. This step is critical since E2 C-terminus is involved in budding by interacting with capsid proteins. This release of E2 C-terminus in cytoplasm occurs lately in protein export, and precludes premature assembly of particles at the endoplasmic reticulum membrane. Protein 6K: Acts as a viroporin that participates in virus glycoprotein processing and transport to the plasma membrane, cell permeabilization and budding of viral particles. Disrupts the calcium homeostasis of the cell, probably at the endoplasmic reticulum level resulting in the increased levels of cytoplasmic calcium. Because of its lipophilic properties, the 6K protein is postulated to influence the selection of lipids that interact with the transmembrane domains of the glycoproteins, which, in turn, affects the deformability of the bilayer required for the extreme curvature that occurs as budding proceeds. Present in low amount in virions, about 3% compared to viral glycoproteins. Functionally, class II viral fusion protein. Fusion activity is inactive as long as E1 is bound to E2 in mature virion. After virus attachment to target cell receptor PCDH10 and endocytosis, acidification of the endosome induce dissociation of E1/E2 heterodimer and concomitant trimerization of the E1 subunits. This E1 trimer is fusion active, and promotes release of viral nucleocapsid in cytoplasm after endosome and viral membrane fusion. Efficient fusion requires the presence of cholesterol and sphingolipid in the target membrane. In Western equine encephalitis virus (WEEV), this protein is Structural polyprotein.